The sequence spans 312 residues: MIFSTLEHILTHISFSIVSIVITIHLITFLVDEIVKLYDSSEKGIIVTFFCITGLLVTRWISSGHFPLSDLYESLIFLSWSFSLIHIIPYFKNNVLILSKITGPSAIFTQGFATSGILTEIHQSGILVPALQSEWLIMHVSMMILGYAALLCGSLLSVALLVITFRKNRKLFYKSNGFVNESFLLGENVLENTSFSAKNYYRSQLIQQLDYWSYRVISLGFTFLTIGILSGAVWANEAWGSYWNWDPKETWAFITWIVFAIYLHTRTNINLRGANSAIIATIGFLIIWICYFGVNLLGIGLHSYGSFTSTFN.

8 helical membrane-spanning segments follow: residues 9–29 (ILTHISFSIVSIVITIHLITF), 44–64 (GIIVTFFCITGLLVTRWISSG), 71–91 (LYESLIFLSWSFSLIHIIPYF), 111–131 (GFATSGILTEIHQSGILVPAL), 143–163 (MILGYAALLCGSLLSVALLVI), 216–236 (VISLGFTFLTIGILSGAVWAN), 251–271 (WAFITWIVFAIYLHTRTNINL), and 277–297 (AIIATIGFLIIWICYFGVNLL).

It belongs to the CcmF/CycK/Ccl1/NrfE/CcsA family. May interact with Ccs1.

Its subcellular location is the plastid. The protein localises to the chloroplast thylakoid membrane. Functionally, required during biogenesis of c-type cytochromes (cytochrome c6 and cytochrome f) at the step of heme attachment. The protein is Cytochrome c biogenesis protein CcsA of Atropa belladonna (Belladonna).